A 115-amino-acid chain; its full sequence is MRYVASYLLAALGGNSSPSAKDIKKILDSVGIEADDDRLNKVISELNGKNIEDVIAQGVGKLASVPAGGAVAVSAAPGSAAPAAGSAPAAAEEKKDEKKEESEESDDDMGFGLFD.

N-acetylmethionine is present on Met1. 2 positions are modified to phosphoserine: Ser17 and Ser19. The residue at position 21 (Lys21) is an N6-acetyllysine; alternate. Lys21 is modified (N6-succinyllysine; alternate). Residues 76–90 are compositionally biased toward low complexity; the sequence is APGSAAPAAGSAPAA. The segment at 76–115 is disordered; it reads APGSAAPAAGSAPAAAEEKKDEKKEESEESDDDMGFGLFD. A phosphoserine mark is found at Ser79 and Ser86. Residues 91 to 101 show a composition bias toward basic and acidic residues; the sequence is AEEKKDEKKEE. Phosphoserine is present on residues Ser102 and Ser105.

This sequence belongs to the eukaryotic ribosomal protein P1/P2 family. In terms of assembly, heterodimer with RPLP1 at the lateral ribosomal stalk of the large ribosomal subunit.

Plays an important role in the elongation step of protein synthesis. The polypeptide is Large ribosomal subunit protein P2 (Rplp2) (Mus musculus (Mouse)).